A 545-amino-acid chain; its full sequence is Capsular polysaccharide phosphotransferase SacB (545 aa).

This sequence belongs to the stealth family.

Functionally, may be the polymerase that links individual UDP-N-acetyl-D-mannosamine monomers. In serotype A the capsule is composed of repeated units of (alpha 1-6)-linked N-acetyl-D-mannosamine-1-phosphate. This chain is Capsular polysaccharide phosphotransferase SacB (sacB), found in Neisseria meningitidis serogroup A.